A 686-amino-acid chain; its full sequence is Potassium-transporting ATPase ATP-binding subunit 2 (686 aa).

4 helical membrane-spanning segments follow: residues 37 to 57 (MFVV…PNLF), 64 to 84 (MILY…FANF), 223 to 243 (LLVS…PMAI), and 255 to 275 (VALT…AIGI). The active-site 4-aspartylphosphate intermediate is the aspartate 306. Residues aspartate 343, glutamate 347, 376 to 383 (FTAQTRMS), and lysine 395 each bind ATP. Aspartate 518 and aspartate 522 together coordinate Mg(2+). Helical transmembrane passes span 588-608 (FAII…LNIM), 616-636 (AILS…PLAM), and 656-676 (VYGV…DLVI).

The protein belongs to the cation transport ATPase (P-type) (TC 3.A.3) family. Type IA subfamily. In terms of assembly, the system is composed of three essential subunits: KdpA, KdpB and KdpC.

The protein resides in the cell membrane. It catalyses the reaction K(+)(out) + ATP + H2O = K(+)(in) + ADP + phosphate + H(+). In terms of biological role, part of the high-affinity ATP-driven potassium transport (or Kdp) system, which catalyzes the hydrolysis of ATP coupled with the electrogenic transport of potassium into the cytoplasm. This subunit is responsible for energy coupling to the transport system and for the release of the potassium ions to the cytoplasm. The chain is Potassium-transporting ATPase ATP-binding subunit 2 from Listeria innocua serovar 6a (strain ATCC BAA-680 / CLIP 11262).